Consider the following 447-residue polypeptide: Trigger factor (447 aa).

The 86-residue stretch at Gly-164–Pro-249 folds into the PPIase FKBP-type domain.

The protein belongs to the FKBP-type PPIase family. Tig subfamily.

It localises to the cytoplasm. The catalysed reaction is [protein]-peptidylproline (omega=180) = [protein]-peptidylproline (omega=0). Functionally, involved in protein export. Acts as a chaperone by maintaining the newly synthesized protein in an open conformation. Functions as a peptidyl-prolyl cis-trans isomerase. This Psychrobacter cryohalolentis (strain ATCC BAA-1226 / DSM 17306 / VKM B-2378 / K5) protein is Trigger factor.